We begin with the raw amino-acid sequence, 363 residues long: MSKKNNLLVAASGTGGHIFPALAVTKEVEDKWNIHWLGVHKRLDANFIPKKYNLRTLNIKTPRKNIFLFYQYFRILMSTFQVIWILKEEKINLVFTTGGYISAPTIIASKLLRIPVIIHESNLIPGMVTKNFGFLCNYVLLGFKRTNSYLKNCKTIFTGTPLREQFYKSNLLPDWVPQGKGPLLIVMGGSQGAKAINQILYESLDFLMKKQFRIVHIIGECNQKYFNLNTSNNYVQKKFTNEIAALIQNCDLVISRSGAGTINELIESEKPSILIPYPNSKNNHQEKNAMILAESGGSILINQNNISKEVFEETLERIFKIKSKKGKNHYEILDLMKKNMENNKKIKSKIEIKKFINYFLKEF.

Residues 14-16 (TGG), N122, R163, S190, and Q285 contribute to the UDP-N-acetyl-alpha-D-glucosamine site.

It belongs to the glycosyltransferase 28 family. MurG subfamily.

The protein resides in the cell inner membrane. The enzyme catalyses di-trans,octa-cis-undecaprenyl diphospho-N-acetyl-alpha-D-muramoyl-L-alanyl-D-glutamyl-meso-2,6-diaminopimeloyl-D-alanyl-D-alanine + UDP-N-acetyl-alpha-D-glucosamine = di-trans,octa-cis-undecaprenyl diphospho-[N-acetyl-alpha-D-glucosaminyl-(1-&gt;4)]-N-acetyl-alpha-D-muramoyl-L-alanyl-D-glutamyl-meso-2,6-diaminopimeloyl-D-alanyl-D-alanine + UDP + H(+). Its pathway is cell wall biogenesis; peptidoglycan biosynthesis. Cell wall formation. Catalyzes the transfer of a GlcNAc subunit on undecaprenyl-pyrophosphoryl-MurNAc-pentapeptide (lipid intermediate I) to form undecaprenyl-pyrophosphoryl-MurNAc-(pentapeptide)GlcNAc (lipid intermediate II). The polypeptide is UDP-N-acetylglucosamine--N-acetylmuramyl-(pentapeptide) pyrophosphoryl-undecaprenol N-acetylglucosamine transferase (Prochlorococcus marinus (strain MIT 9301)).